A 246-amino-acid chain; its full sequence is MNDWMPIAKEYDPLKAGSIDGTDEDPHDRAVWRAMLARYVPNKGVIGDPLLTLFVARLNLQTKEDKLKEVFSRYGDIRRLRLVRDLVTGFSKGYAFIEYKEERAVIKAYRDADGLVIDQHEIFVDYELERTLKGWIPRRLGGGLGGKKESGQLRFGGRDRPFRKPINLPVVKNDLYREGKRERRERSRSRERHWDSRTRDRDHDRGREKRWQEREPTRVWPDNDWERERDFRDDRIKGREKKERGK.

The RRM domain maps to 51-129; it reads LTLFVARLNL…HEIFVDYELE (79 aa). K172 participates in a covalent cross-link: Glycyl lysine isopeptide (Lys-Gly) (interchain with G-Cter in SUMO2). A disordered region spans residues 187 to 217; sequence SRSRERHWDSRTRDRDHDRGREKRWQEREPT. A compositionally biased stretch (basic and acidic residues) spans 192 to 217; the sequence is RHWDSRTRDRDHDRGREKRWQEREPT.

Component of the U11/U12 snRNPs that are part of the U12-type spliceosome. In terms of tissue distribution, expressed in heart, liver, skeletal muscle and pancreas.

The protein resides in the nucleus. The sequence is that of U11/U12 small nuclear ribonucleoprotein 35 kDa protein (SNRNP35) from Homo sapiens (Human).